The sequence spans 1491 residues: Chromosome partition protein MukB (1491 aa).

34-41 is a binding site for ATP; that stretch reads GGNGAGKS. Coiled-coil stretches lie at residues 302 to 450, 490 to 600, 781 to 806, 836 to 1109, and 1210 to 1239; these read LIEQ…LKAE, ARSE…RFES, RAAR…AKAS, EQAL…DLRT, and VEAI…ISSD. Positions 667–784 are flexible hinge; the sequence is PGGSNDPRLK…AIPLFGRAAR (118 aa). The disordered stretch occupies residues 1059–1080; sequence QRRRDELQERLHTSRSRKSEYE.

The protein belongs to the SMC family. MukB subfamily. As to quaternary structure, homodimerization via its hinge domain. Binds to DNA via its C-terminal region. Interacts, and probably forms a ternary complex, with MukE and MukF via its C-terminal region. The complex formation is stimulated by calcium or magnesium. Interacts with tubulin-related protein FtsZ.

It localises to the cytoplasm. The protein localises to the nucleoid. In terms of biological role, plays a central role in chromosome condensation, segregation and cell cycle progression. Functions as a homodimer, which is essential for chromosome partition. Involved in negative DNA supercoiling in vivo, and by this means organize and compact chromosomes. May achieve or facilitate chromosome segregation by condensation DNA from both sides of a centrally located replisome during cell division. This is Chromosome partition protein MukB from Vibrio cholerae serotype O1 (strain ATCC 39315 / El Tor Inaba N16961).